The chain runs to 390 residues: Stearoyl-[acyl-carrier-protein] 9-desaturase, chloroplastic (390 aa).

The N-terminal 27 residues, Met-1–Met-27, are a transit peptide targeting the chloroplast. The Fe cation site is built by Glu-132, Glu-170, His-173, Glu-223, Glu-256, and His-259.

Belongs to the fatty acid desaturase type 2 family. In terms of assembly, homodimer. Fe(2+) is required as a cofactor.

Its subcellular location is the plastid. The protein resides in the chloroplast. It carries out the reaction octadecanoyl-[ACP] + 2 reduced [2Fe-2S]-[ferredoxin] + O2 + 2 H(+) = (9Z)-octadecenoyl-[ACP] + 2 oxidized [2Fe-2S]-[ferredoxin] + 2 H2O. It functions in the pathway lipid metabolism; fatty acid metabolism. In terms of biological role, converts stearoyl-ACP to oleoyl-ACP by introduction of a cis double bond between carbons 9 and 10 of the acyl chain. The sequence is that of Stearoyl-[acyl-carrier-protein] 9-desaturase, chloroplastic from Olea europaea (Common olive).